A 383-amino-acid chain; its full sequence is Delta(12) fatty acid desaturase FAD2 (383 aa).

Residues 1–29 (MGAGGRMQDPTNGGNKTEPEPIQRVPHEK) form a disordered region. A compositionally biased stretch (basic and acidic residues) spans 17–29 (TEPEPIQRVPHEK). The next 2 membrane-spanning stretches (helical) occupy residues 50 to 70 (VIRS…LYYI) and 85 to 105 (VAWP…WVIA). The short motif at 106 to 110 (HECGH) is the Histidine box-1 element. A helical transmembrane segment spans residues 118-138 (WLDDTVGLVLHSFLLVPYFSW). The Histidine box-2 signature appears at 142 to 146 (HRRHH). 3 helical membrane passes run 180–200 (ILTL…FNVS), 226–246 (IFIS…LAMT), and 252–272 (VLTM…LITF). Residues 316–320 (HVAHH) carry the Histidine box-3 motif.

The protein belongs to the fatty acid desaturase type 1 family. As to expression, expressed in leaves, flower buds and developing seeds.

The protein resides in the membrane. Its pathway is lipid metabolism; polyunsaturated fatty acid biosynthesis. Functionally, catalyzes the desaturation of oleic acid to linoleic acid. Introduces a double bond at position 12 of 16:1(9Z) and 18:1(9Z). This chain is Delta(12) fatty acid desaturase FAD2, found in Calendula officinalis (Pot marigold).